The primary structure comprises 83 residues: Hainantoxin-III 9 (83 aa).

An N-terminal signal peptide occupies residues 1-21; that stretch reads MKASMFLALAGLALLFVVCYA. Positions 22-48 are excised as a propeptide; the sequence is SESEEKEFPIELLSKIFAVDVFKGEER. 3 disulfides stabilise this stretch: Cys-50–Cys-65, Cys-57–Cys-70, and Cys-64–Cys-77. Leu-81 carries the leucine amide modification.

Belongs to the neurotoxin 10 (Hwtx-1) family. 15 (Hntx-3) subfamily. In terms of assembly, monomer. In terms of tissue distribution, expressed by the venom gland.

It is found in the secreted. Selective antagonist of neuronal tetrodotoxin (TTX)-sensitive voltage-gated sodium channels (IC(50)=1270 nM on Nav1.1/SCN1A, 270 nM on Nav1.2/SCN2A, 491 nM on Nav1.3/SCN3A and 232 nM on Nav1.7/SCN9A). This toxin suppress Nav1.7 current amplitude without significantly altering the activation, inactivation, and repriming kinetics. Short extreme depolarizations partially activate the toxin-bound channel, indicating voltage-dependent inhibition of this toxin. This toxin increases the deactivation of the Nav1.7 current after extreme depolarizations. The toxin-Nav1.7 complex is gradually dissociated upon prolonged strong depolarizations in a voltage-dependent manner, and the unbound toxin rebinds to Nav1.7 after a long repolarization. Moreover, analysis of chimeric channels showed that the DIIS3-S4 linker is critical for toxin binding to Nav1.7. These data are consistent with this toxin interacting with Nav1.7 site 4 and trapping the domain II voltage sensor in the closed state. The chain is Hainantoxin-III 9 from Cyriopagopus hainanus (Chinese bird spider).